The primary structure comprises 484 residues: BAHD acyltransferase DCR (484 aa).

The Proton acceptor role is filled by His168. Positions 211 to 233 (LDLTAPKDPNETSNGEDAANPTV) are disordered. Asp394 acts as the Proton acceptor in catalysis. A disordered region spans residues 452-484 (EEEEDDGKKLTNGNGHVNGNGNGYVNGNGNGFV). Residues 467 to 484 (HVNGNGNGYVNGNGNGFV) are compositionally biased toward gly residues.

This sequence belongs to the plant acyltransferase family. As to expression, expressed in root caps and lateral root emerging sites, in trichomes, in epidermis in stems, sepals and anther filaments, and in pollen grains and torpedo stage seeds.

The protein localises to the cytoplasm. It localises to the cytosol. In terms of biological role, required for incorporation of 9(10),16-dihydroxy-hexadecanoic acid into cutin. The sequence is that of BAHD acyltransferase DCR (DCR) from Arabidopsis thaliana (Mouse-ear cress).